Consider the following 296-residue polypeptide: tRNA uridine(34) hydroxylase (296 aa).

One can recognise a Rhodanese domain in the interval 132 to 226 (AGRPVVMLDT…YFEEVGGAHY (95 aa)). The Cysteine persulfide intermediate role is filled by C186.

The protein belongs to the TrhO family.

The enzyme catalyses uridine(34) in tRNA + AH2 + O2 = 5-hydroxyuridine(34) in tRNA + A + H2O. Functionally, catalyzes oxygen-dependent 5-hydroxyuridine (ho5U) modification at position 34 in tRNAs. The protein is tRNA uridine(34) hydroxylase of Burkholderia thailandensis (strain ATCC 700388 / DSM 13276 / CCUG 48851 / CIP 106301 / E264).